The sequence spans 327 residues: Probable cell division protein WhiA (327 aa).

The segment at residues 275–308 (SLEELGRLADPPMTKDAVAGRIRRLLSMADRKAK) is a DNA-binding region (H-T-H motif). Residues 304 to 327 (DRKAKQDGIPDTESAVTPDLLEDA) are disordered.

The protein belongs to the WhiA family.

Its function is as follows. Involved in cell division and chromosome segregation. This Mycobacterium sp. (strain MCS) protein is Probable cell division protein WhiA.